We begin with the raw amino-acid sequence, 536 residues long: Apolipoprotein N-acyltransferase (536 aa).

Helical transmembrane passes span 10 to 30 (IASGIILAWGWKRAVIALLAG), 42 to 62 (AWPVLFITFPIAVWLIDGSAA), 76 to 96 (WWFGFGYFVPGLYWIGYAFLV), 107 to 127 (AAICGLPAYLALFTALGFALA), 136 to 158 (LRILSLAVSLTISEWLRGHLLTG), 181 to 201 (IGIWGLTLLTVAIFASPAVLI), and 212 to 232 (AVPAMALGVLAAMTVFGGIRL). The 254-residue stretch at 248–501 (MQPNLPQDAR…EGVLDSGLPA (254 aa)) folds into the CN hydrolase domain. Catalysis depends on glutamate 295, which acts as the Proton acceptor. Residue lysine 360 is part of the active site. Cysteine 413 functions as the Nucleophile in the catalytic mechanism. Residues 509 to 529 (ARVGELPAAVLVALVMMLVLL) traverse the membrane as a helical segment.

This sequence belongs to the CN hydrolase family. Apolipoprotein N-acyltransferase subfamily.

The protein localises to the cell inner membrane. The enzyme catalyses N-terminal S-1,2-diacyl-sn-glyceryl-L-cysteinyl-[lipoprotein] + a glycerophospholipid = N-acyl-S-1,2-diacyl-sn-glyceryl-L-cysteinyl-[lipoprotein] + a 2-acyl-sn-glycero-3-phospholipid + H(+). Its pathway is protein modification; lipoprotein biosynthesis (N-acyl transfer). Catalyzes the phospholipid dependent N-acylation of the N-terminal cysteine of apolipoprotein, the last step in lipoprotein maturation. The sequence is that of Apolipoprotein N-acyltransferase from Rhodopseudomonas palustris (strain ATCC BAA-98 / CGA009).